A 145-amino-acid polypeptide reads, in one-letter code: Superoxide dismutase [Mn/Fe] (145 aa).

Fe(3+)-binding residues include histidine 10 and histidine 64. Mn(2+) is bound by residues histidine 10 and histidine 64.

Belongs to the iron/manganese superoxide dismutase family. Requires Mn(2+) as cofactor. Fe(3+) is required as a cofactor.

It catalyses the reaction 2 superoxide + 2 H(+) = H2O2 + O2. Destroys superoxide anion radicals which are normally produced within the cells and which are toxic to biological systems. Catalyzes the dismutation of superoxide anion radicals into O2 and H2O2 by successive reduction and oxidation of the transition metal ion at the active site. The sequence is that of Superoxide dismutase [Mn/Fe] (sodA) from Streptococcus parasanguinis.